The following is a 434-amino-acid chain: Oxysterol-binding protein homolog 5 (434 aa).

Positions 18 to 371 (SSFNGDLSSL…KQVDYMNENT (354 aa)) are OSBP-related domain (ORD). 24-29 (LSSLSA) serves as a coordination point for a 1,2-diacyl-sn-glycero-3-phospho-(1D-myo-inositol 4-phosphate). Q96 provides a ligand contact to 20-hydroxycholesterol. Q96 provides a ligand contact to 25-hydroxycholesterol. 2 residues coordinate 7beta-hydroxycholesterol: Q96 and R100. Q96 contributes to the cholesterol binding site. An ergosterol-binding site is contributed by Q96. A 1,2-diacyl-sn-glycero-3-phospho-(1D-myo-inositol 4-phosphate) contacts are provided by residues 109-112 (KPLN), 143-144 (HH), K335, E339, and R343. S389 is modified (phosphoserine).

It belongs to the OSBP family.

It is found in the vacuole membrane. The protein resides in the bud neck. Functionally, lipid transport protein (LTP) involved in non-vesicular transfer of lipids between membranes. Functions in phosphoinositide-coupled directional transport of various lipids by carrying the lipid molecule in a hydrophobic pocket and transferring it between membranes through the cytosol. Involved in maintenance of intracellular sterol distribution and homeostasis. Plays a role in ergosterol synthesis. Binds and transports sterol. May be involved in ergosterol transport from the plasma membrane (PM) to the ER. The sequence is that of Oxysterol-binding protein homolog 5 from Saccharomyces cerevisiae (strain ATCC 204508 / S288c) (Baker's yeast).